Reading from the N-terminus, the 181-residue chain is Endoribonuclease YbeY (181 aa).

Zn(2+) is bound by residues His120, His124, and His130. The tract at residues 157–181 (AGGKRPAGGADGADGAGEPGPTAAR) is disordered. Residues 161–174 (RPAGGADGADGAGE) are compositionally biased toward gly residues.

The protein belongs to the endoribonuclease YbeY family. Zn(2+) serves as cofactor.

The protein localises to the cytoplasm. Functionally, single strand-specific metallo-endoribonuclease involved in late-stage 70S ribosome quality control and in maturation of the 3' terminus of the 16S rRNA. This chain is Endoribonuclease YbeY, found in Frankia alni (strain DSM 45986 / CECT 9034 / ACN14a).